Consider the following 218-residue polypeptide: Large ribosomal subunit protein uL3 (218 aa).

At Q154 the chain carries N5-methylglutamine.

It belongs to the universal ribosomal protein uL3 family. As to quaternary structure, part of the 50S ribosomal subunit. Forms a cluster with proteins L14 and L19. Methylated by PrmB.

Its function is as follows. One of the primary rRNA binding proteins, it binds directly near the 3'-end of the 23S rRNA, where it nucleates assembly of the 50S subunit. The polypeptide is Large ribosomal subunit protein uL3 (Polynucleobacter asymbioticus (strain DSM 18221 / CIP 109841 / QLW-P1DMWA-1) (Polynucleobacter necessarius subsp. asymbioticus)).